We begin with the raw amino-acid sequence, 258 residues long: Malonyl-[acyl-carrier protein] O-methyltransferase (258 aa).

This sequence belongs to the methyltransferase superfamily.

It carries out the reaction malonyl-[ACP] + S-adenosyl-L-methionine = malonyl-[ACP] methyl ester + S-adenosyl-L-homocysteine. It functions in the pathway cofactor biosynthesis; biotin biosynthesis. Its function is as follows. Converts the free carboxyl group of a malonyl-thioester to its methyl ester by transfer of a methyl group from S-adenosyl-L-methionine (SAM). It allows to synthesize pimeloyl-ACP via the fatty acid synthetic pathway. In Hamiltonella defensa subsp. Acyrthosiphon pisum (strain 5AT), this protein is Malonyl-[acyl-carrier protein] O-methyltransferase.